The following is a 476-amino-acid chain: Nitrosuccinate lyase (476 aa).

Positions 137, 140, and 201 each coordinate fumarate. Ser-302 (proton acceptor) is an active-site residue. 2 residues coordinate fumarate: Lys-308 and Asn-310. The active-site Proton donor is the Arg-341.

Belongs to the class-II fumarase/aspartase family. Homotetramer.

It catalyses the reaction 2-nitrobutanedioate = fumarate + nitrite + H(+). Its pathway is antibiotic biosynthesis. Its function is as follows. Part of a gene cluster involved in the biosynthesis of cremeomycin, a light-sensitive o-diazoquinone with antibacterial and antiproliferative effects. Catalyzes the formation of nitrous acid from nitrosuccinic acid (2-nitrobutanedioate) by elimination of its nitro group. The sequence is that of Nitrosuccinate lyase from Streptomyces cremeus.